Here is a 607-residue protein sequence, read N- to C-terminus: UvrABC system protein C (607 aa).

The GIY-YIG domain maps to 16-94 (GRPGVYRMFD…IKEWRPPYNI (79 aa)). The region spanning 203–238 (HALTNELSTAMEEAAINLEFERAAELRDQIALLRRV) is the UVR domain.

It belongs to the UvrC family. Interacts with UvrB in an incision complex.

The protein localises to the cytoplasm. In terms of biological role, the UvrABC repair system catalyzes the recognition and processing of DNA lesions. UvrC both incises the 5' and 3' sides of the lesion. The N-terminal half is responsible for the 3' incision and the C-terminal half is responsible for the 5' incision. This chain is UvrABC system protein C, found in Pseudomonas fluorescens (strain Pf0-1).